The primary structure comprises 271 residues: DNA-directed RNA polymerase subunit Rpo3 (271 aa).

Belongs to the archaeal Rpo3/eukaryotic RPB3 RNA polymerase subunit family. In terms of assembly, part of the RNA polymerase complex.

It localises to the cytoplasm. The catalysed reaction is RNA(n) + a ribonucleoside 5'-triphosphate = RNA(n+1) + diphosphate. In terms of biological role, DNA-dependent RNA polymerase (RNAP) catalyzes the transcription of DNA into RNA using the four ribonucleoside triphosphates as substrates. This is DNA-directed RNA polymerase subunit Rpo3 from Thermoplasma volcanium (strain ATCC 51530 / DSM 4299 / JCM 9571 / NBRC 15438 / GSS1).